Consider the following 1230-residue polypeptide: Serine/threonine-protein kinase CST20 (1230 aa).

Residues 1 to 20 (MSILSENNPTPTSITDPNKS) are compositionally biased toward polar residues. 2 disordered regions span residues 1 to 384 (MSIL…TAHN) and 413 to 470 (SSLE…HSQE). 2 stretches are compositionally biased toward low complexity: residues 57-70 (NTTS…SLGS) and 96-125 (SGSG…NPES). The span at 150-161 (HQGDDSDNEKQY) shows a compositional bias: basic and acidic residues. Composition is skewed to polar residues over residues 175–197 (DSYS…NNVS), 207–224 (TSSL…NENA), and 237–246 (PTSKTSSFHD). Residues 248–257 (SSVISSSTSV) are compositionally biased toward low complexity. Composition is skewed to polar residues over residues 262–277 (SNPT…SYKS) and 311–330 (DTLS…TLQG). Composition is skewed to low complexity over residues 349–381 (NTSA…STST) and 439–468 (KVRG…NSHS). The CRIB domain occupies 475–488 (ISTPFNAKHLAHVG). Disordered regions lie at residues 545–831 (FHFD…ALAD) and 867–919 (LREK…KQAA). The span at 550–561 (NKSSSSGWSNEN) shows a compositional bias: polar residues. The span at 570-581 (SNSGSGSGGGGA) shows a compositional bias: gly residues. Residues 604-613 (ITPSQSMPTK) are compositionally biased toward polar residues. A compositionally biased stretch (basic and acidic residues) spans 614–628 (TESKQSENQHPHEDN). Over residues 629-642 (ATQYTPRTPTSHVQ) the composition is skewed to polar residues. Low complexity-rich tracts occupy residues 670–683 (PSSQ…SQSD), 696–710 (SPSK…SKSL), and 736–749 (SIPK…SLSS). The segment covering 750–761 (QLRPATNGSTTA) has biased composition (polar residues). Positions 789 to 807 (APPPPPSAPPAPPVPPAPP) are enriched in pro residues. The span at 811 to 826 (LSEQTSEIPQQRTAPS) shows a compositional bias: polar residues. Over residues 867-876 (LREKNERQNR) the composition is skewed to basic and acidic residues. Polar residues predominate over residues 877-892 (QQETGQNNADTASGGS). A Protein kinase domain is found at 953 to 1205 (YVDLVKIGQG…ADELLHDNFI (253 aa)). Residues 959-967 (IGQGASGGV) and lysine 983 contribute to the ATP site. Aspartate 1073 acts as the Proton acceptor in catalysis.

It belongs to the protein kinase superfamily. STE Ser/Thr protein kinase family. STE20 subfamily.

Its subcellular location is the cytoplasm. The protein resides in the nucleus. It carries out the reaction L-seryl-[protein] + ATP = O-phospho-L-seryl-[protein] + ADP + H(+). The catalysed reaction is L-threonyl-[protein] + ATP = O-phospho-L-threonyl-[protein] + ADP + H(+). Its function is as follows. MAP4K component of the MAPK pathway required for the mating pheromone response, and the regulation of cell polarity and cell cycle. Phosphorylates histone H2B to form H2BS10ph. Required for hyphal formation and virulence. This Candida albicans (Yeast) protein is Serine/threonine-protein kinase CST20 (CST20).